We begin with the raw amino-acid sequence, 92 residues long: Cell division topological specificity factor (92 aa).

The protein belongs to the MinE family.

Functionally, prevents the cell division inhibition by proteins MinC and MinD at internal division sites while permitting inhibition at polar sites. This ensures cell division at the proper site by restricting the formation of a division septum at the midpoint of the long axis of the cell. This is Cell division topological specificity factor from Colwellia psychrerythraea (strain 34H / ATCC BAA-681) (Vibrio psychroerythus).